Here is a 761-residue protein sequence, read N- to C-terminus: Xaa-Pro dipeptidyl-peptidase (761 aa).

Active-site charge relay system residues include Ser-347, Asp-467, and His-497.

It belongs to the peptidase S15 family. In terms of assembly, homodimer.

It localises to the cytoplasm. It carries out the reaction Hydrolyzes Xaa-Pro-|- bonds to release unblocked, N-terminal dipeptides from substrates including Ala-Pro-|-p-nitroanilide and (sequentially) Tyr-Pro-|-Phe-Pro-|-Gly-Pro-|-Ile.. Its function is as follows. Removes N-terminal dipeptides sequentially from polypeptides having unsubstituted N-termini provided that the penultimate residue is proline. This is Xaa-Pro dipeptidyl-peptidase from Streptococcus agalactiae serotype Ia (strain ATCC 27591 / A909 / CDC SS700).